Here is a 456-residue protein sequence, read N- to C-terminus: MSSQIKQVFARQILDSRGNPTVEVDVVLESGAFGRAAVPSGASTGIREALELRDGNKALFLGKSVYKAVENVNTKIAQAVKGLDALDQRLIDKTMIELDGSENKKNLGANAILGVSLATARAAASHLRKPFYRYLMDVKEYLMPVPMMNVINGGSHADNNVDMQEFMIVPAGFDTFSEALRCGTEVFHTLKKVLIADGYSVAGVGDEGGYAPDLPSNEAAIEAILKAVKEAGYEPGKHVFIALDPASSEFYKDGKYELKSENKSLTSEEMIDYYAAWVEKYPIVSIEDGLAEEDWAGWKLLTEKLGNKVQLVGDDLFVTNPSILAKGIEKGIANSILIKLNQIGTLTETFEAMAMAGQAGYTCVVSHRSGETSDTIIADLAVATCSGQIKTGSLSRSDRIAKYNQLLRIEEELGENAIYPGIKAFVFNSDEEVEEDVQEIIVEDSEAEKVVVQVEE.

Position 164 (Gln-164) interacts with (2R)-2-phosphoglycerate. Catalysis depends on Glu-207, which acts as the Proton donor. Mg(2+) contacts are provided by Asp-244, Glu-287, and Asp-314. (2R)-2-phosphoglycerate contacts are provided by Lys-339, Arg-368, Ser-369, and Lys-390. The active-site Proton acceptor is the Lys-339.

Belongs to the enolase family. As to quaternary structure, component of the RNA degradosome, a multiprotein complex involved in RNA processing and mRNA degradation. The cofactor is Mg(2+).

The protein resides in the cytoplasm. Its subcellular location is the secreted. It is found in the cell surface. The enzyme catalyses (2R)-2-phosphoglycerate = phosphoenolpyruvate + H2O. It participates in carbohydrate degradation; glycolysis; pyruvate from D-glyceraldehyde 3-phosphate: step 4/5. Catalyzes the reversible conversion of 2-phosphoglycerate (2-PG) into phosphoenolpyruvate (PEP). It is essential for the degradation of carbohydrates via glycolysis. This Francisella tularensis subsp. novicida (strain U112) protein is Enolase.